A 92-amino-acid polypeptide reads, in one-letter code: Acyl carrier protein (92 aa).

One can recognise a Carrier domain in the interval 1–84; that stretch reads MPSTADERQL…QIAAHLAEAV (84 aa). Ser44 bears the O-(pantetheine 4'-phosphoryl)serine mark.

The protein belongs to the acyl carrier protein (ACP) family. In terms of processing, 4'-phosphopantetheine is transferred from CoA to a specific serine of apo-ACP by AcpS. This modification is essential for activity because fatty acids are bound in thioester linkage to the sulfhydryl of the prosthetic group.

It is found in the cytoplasm. Its pathway is lipid metabolism; fatty acid biosynthesis. Functionally, carrier of the growing fatty acid chain in fatty acid biosynthesis. The sequence is that of Acyl carrier protein from Streptomyces coelicolor (strain ATCC BAA-471 / A3(2) / M145).